A 264-amino-acid chain; its full sequence is Small ribosomal subunit protein uS2 (264 aa).

Positions 228–264 are disordered; sequence VDTSATVDEEEAEVAEETESMESAEDLDADLIEEEAE. Positions 234–264 are enriched in acidic residues; the sequence is VDEEEAEVAEETESMESAEDLDADLIEEEAE.

This sequence belongs to the universal ribosomal protein uS2 family.

The sequence is that of Small ribosomal subunit protein uS2 from Symbiobacterium thermophilum (strain DSM 24528 / JCM 14929 / IAM 14863 / T).